A 131-amino-acid polypeptide reads, in one-letter code: Small ribosomal subunit protein uS12 (131 aa).

At aspartate 89 the chain carries 3-methylthioaspartic acid.

It belongs to the universal ribosomal protein uS12 family. In terms of assembly, part of the 30S ribosomal subunit. Contacts proteins S8 and S17. May interact with IF1 in the 30S initiation complex.

In terms of biological role, with S4 and S5 plays an important role in translational accuracy. Its function is as follows. Interacts with and stabilizes bases of the 16S rRNA that are involved in tRNA selection in the A site and with the mRNA backbone. Located at the interface of the 30S and 50S subunits, it traverses the body of the 30S subunit contacting proteins on the other side and probably holding the rRNA structure together. The combined cluster of proteins S8, S12 and S17 appears to hold together the shoulder and platform of the 30S subunit. The protein is Small ribosomal subunit protein uS12 of Karelsulcia muelleri (strain GWSS) (Sulcia muelleri).